A 1036-amino-acid polypeptide reads, in one-letter code: uncharacterized protein (1036 aa).

The first 24 residues, 1-24 (MKRVGLIGVIMAALLVISATPVMA), serve as a signal peptide directing secretion. Residues 1011–1033 (GGGVPGFEAVFAIAGLLAVAYLL) traverse the membrane as a helical segment.

Its subcellular location is the membrane. This is an uncharacterized protein from Archaeoglobus fulgidus (strain ATCC 49558 / DSM 4304 / JCM 9628 / NBRC 100126 / VC-16).